Consider the following 63-residue polypeptide: Large ribosomal subunit protein bL28c (63 aa).

The protein belongs to the bacterial ribosomal protein bL28 family.

The protein resides in the plastid. Its subcellular location is the chloroplast. This chain is Large ribosomal subunit protein bL28c, found in Pyropia yezoensis (Susabi-nori).